Here is a 511-residue protein sequence, read N- to C-terminus: 2,3-bisphosphoglycerate-independent phosphoglycerate mutase (511 aa).

The Mn(2+) site is built by Asp14 and Ser64. Catalysis depends on Ser64, which acts as the Phosphoserine intermediate. Substrate-binding positions include His125, Arg155–Asp156, Arg187, Arg193, Arg259–Arg262, and Lys333. Residues Asp400, His404, Asp441, His442, and His460 each contribute to the Mn(2+) site.

The protein belongs to the BPG-independent phosphoglycerate mutase family. Monomer. Mn(2+) serves as cofactor.

It carries out the reaction (2R)-2-phosphoglycerate = (2R)-3-phosphoglycerate. It participates in carbohydrate degradation; glycolysis; pyruvate from D-glyceraldehyde 3-phosphate: step 3/5. Its function is as follows. Catalyzes the interconversion of 2-phosphoglycerate and 3-phosphoglycerate. This is 2,3-bisphosphoglycerate-independent phosphoglycerate mutase from Pseudoalteromonas atlantica (strain T6c / ATCC BAA-1087).